The chain runs to 186 residues: Acireductone dioxygenase (186 aa).

Fe(2+) is bound by residues His-103, His-105, Glu-109, and His-147. Positions 103, 105, 109, and 147 each coordinate Ni(2+).

The protein belongs to the acireductone dioxygenase (ARD) family. In terms of assembly, monomer. It depends on Fe(2+) as a cofactor. Requires Ni(2+) as cofactor.

The catalysed reaction is 1,2-dihydroxy-5-(methylsulfanyl)pent-1-en-3-one + O2 = 3-(methylsulfanyl)propanoate + CO + formate + 2 H(+). It catalyses the reaction 1,2-dihydroxy-5-(methylsulfanyl)pent-1-en-3-one + O2 = 4-methylsulfanyl-2-oxobutanoate + formate + 2 H(+). It participates in amino-acid biosynthesis; L-methionine biosynthesis via salvage pathway; L-methionine from S-methyl-5-thio-alpha-D-ribose 1-phosphate: step 5/6. Catalyzes 2 different reactions between oxygen and the acireductone 1,2-dihydroxy-3-keto-5-methylthiopentene (DHK-MTPene) depending upon the metal bound in the active site. Fe-containing acireductone dioxygenase (Fe-ARD) produces formate and 2-keto-4-methylthiobutyrate (KMTB), the alpha-ketoacid precursor of methionine in the methionine recycle pathway. Ni-containing acireductone dioxygenase (Ni-ARD) produces methylthiopropionate, carbon monoxide and formate, and does not lie on the methionine recycle pathway. This is Acireductone dioxygenase from Synechococcus sp. (strain CC9605).